The chain runs to 224 residues: Agamous-like MADS-box protein AGL9 homolog (224 aa).

An MADS-box domain is found at 3-57; it reads RGRVELKRIEGKINRQVTFAKRRNGLLKKAYELSVLCDAEVALIIFSNRGKLYEF. Residues 89–179 enclose the K-box domain; it reads EISSQQEYLK…KQRLMEGSQL (91 aa).

In terms of tissue distribution, flower specific.

The protein localises to the nucleus. In terms of biological role, probable transcription factor active in inflorescence development and floral organogenesis. The polypeptide is Agamous-like MADS-box protein AGL9 homolog (TDR5) (Solanum lycopersicum (Tomato)).